Here is a 217-residue protein sequence, read N- to C-terminus: Kunitz-type trypsin inhibitor-like 1 protein (217 aa).

The N-terminal stretch at 1–26 is a signal peptide; it reads MKPLSPLTLSFFLFVFITNLSLAFSN. 2 disulfides stabilise this stretch: Cys70–Cys115 and Cys168–Cys175. N-linked (GlcNAc...) asparagine glycosylation is present at Asn191.

It belongs to the protease inhibitor I3 (leguminous Kunitz-type inhibitor) family. Expressed in roots, leaves, epidermal layers of elongating stems, meristems and in the vascular system.

The protein resides in the secreted. Its function is as follows. Might act as a protease inhibitor involved in plant defense responses. In Pisum sativum (Garden pea), this protein is Kunitz-type trypsin inhibitor-like 1 protein (PIP20-1).